We begin with the raw amino-acid sequence, 908 residues long: UPF0182 protein NT01CX_0852 (908 aa).

The next 7 membrane-spanning stretches (helical) occupy residues 8–28, 47–67, 96–116, 157–177, 209–229, 253–273, and 280–300; these read IGLFFCIALTVIFLKKIVNVI, FTSVISLFILVFLICFVAIKT, IINALTLIISLFIALNFSLGY, LLSLLILLAVITVIVYMFLNI, LAILGALLLLCISVGYLIKAW, FYIAISIVSIISSIIVAFSIL, and IISCVILIAVLVISERVVSGA.

The protein belongs to the UPF0182 family.

The protein resides in the cell membrane. The chain is UPF0182 protein NT01CX_0852 from Clostridium novyi (strain NT).